The primary structure comprises 384 residues: F-box protein At2g07140 (384 aa).

Residues Met1 to Ile46 enclose the F-box domain.

In Arabidopsis thaliana (Mouse-ear cress), this protein is F-box protein At2g07140.